The sequence spans 282 residues: Shikimate dehydrogenase (NADP(+)) (282 aa).

Shikimate-binding positions include 15 to 17 (SKS) and threonine 62. The Proton acceptor role is filled by lysine 66. Shikimate contacts are provided by asparagine 87 and aspartate 103. NADP(+) is bound by residues 127 to 131 (GAGGA), 151 to 156 (NRTHTK), and methionine 220. Tyrosine 222 is a binding site for shikimate. An NADP(+)-binding site is contributed by glycine 244.

The protein belongs to the shikimate dehydrogenase family. As to quaternary structure, homodimer.

It carries out the reaction shikimate + NADP(+) = 3-dehydroshikimate + NADPH + H(+). The protein operates within metabolic intermediate biosynthesis; chorismate biosynthesis; chorismate from D-erythrose 4-phosphate and phosphoenolpyruvate: step 4/7. Involved in the biosynthesis of the chorismate, which leads to the biosynthesis of aromatic amino acids. Catalyzes the reversible NADPH linked reduction of 3-dehydroshikimate (DHSA) to yield shikimate (SA). The sequence is that of Shikimate dehydrogenase (NADP(+)) from Shewanella baltica (strain OS223).